Here is a 1042-residue protein sequence, read N- to C-terminus: Atrial natriuretic peptide-converting enzyme (1042 aa).

A disordered region spans residues 1–25 (MKQSPALAPEERCRRAGSPKPVLRA). Residues 1–45 (MKQSPALAPEERCRRAGSPKPVLRADDNNMGNGCSQKLATANLLR) lie on the Cytoplasmic side of the membrane. The DDNN motif signature appears at 26–29 (DDNN). Residues 46-66 (FLLLVLIPCICALVLLLVILL) traverse the membrane as a helical; Signal-anchor for type II membrane protein segment. Residues 67-1042 (SYVGTLQKVY…QIYIQTFLLN (976 aa)) are Extracellular-facing. Residues asparagine 80, asparagine 104, asparagine 135, and asparagine 141 are each glycosylated (N-linked (GlcNAc...) asparagine). Positions 134–259 (RNTSACMNIT…SNVSRICFSP (126 aa)) constitute an FZ 1 domain. Intrachain disulfides connect cysteine 139-cysteine 199, cysteine 147-cysteine 192, cysteine 183-cysteine 223, cysteine 212-cysteine 256, cysteine 216-cysteine 240, cysteine 269-cysteine 282, cysteine 277-cysteine 295, and cysteine 289-cysteine 304. N-linked (GlcNAc...) asparagine glycosylation is found at asparagine 231, asparagine 245, and asparagine 251. 4 consecutive LDL-receptor class A domains span residues 268–304 (LCGR…EAHC), 305–340 (NCSE…EQNC), 341–377 (DCNP…EVNC), and 378–415 (SCHS…ENCS). Residue asparagine 305 is glycosylated (N-linked (GlcNAc...) asparagine). Intrachain disulfides connect cysteine 306–cysteine 318, cysteine 313–cysteine 331, cysteine 325–cysteine 340, cysteine 342–cysteine 355, cysteine 350–cysteine 368, cysteine 362–cysteine 377, cysteine 379–cysteine 392, cysteine 387–cysteine 405, and cysteine 399–cysteine 414. Asparagine 320 carries an N-linked (GlcNAc...) asparagine glycan. Residue asparagine 376 is glycosylated (N-linked (GlcNAc...) asparagine). 4 N-linked (GlcNAc...) asparagine glycosylation sites follow: asparagine 413, asparagine 446, asparagine 451, and asparagine 469. An FZ 2 domain is found at 450–573 (NNCSQCEPIT…NSDNQTCLMP (124 aa)). Cystine bridges form between cysteine 455–cysteine 518, cysteine 463–cysteine 511, cysteine 502–cysteine 540, cysteine 529–cysteine 570, cysteine 533–cysteine 557, cysteine 580–cysteine 592, cysteine 587–cysteine 605, cysteine 599–cysteine 614, cysteine 616–cysteine 630, cysteine 624–cysteine 643, cysteine 637–cysteine 652, cysteine 655–cysteine 667, cysteine 662–cysteine 680, and cysteine 674–cysteine 689. Asparagine 567 carries an N-linked (GlcNAc...) asparagine glycan. LDL-receptor class A domains lie at 579–614 (ECSP…EENC), 615–653 (GCKE…KNCS), and 654–689 (FCQD…EWDC). A glycan (N-linked (GlcNAc...) asparagine) is linked at asparagine 651. The 112-residue stretch at 690–801 (VTLSINVNSS…RRPAARMNKR (112 aa)) folds into the SRCR domain. 2 N-linked (GlcNAc...) asparagine glycosylation sites follow: asparagine 697 and asparagine 761. 5 disulfide bridges follow: cysteine 790/cysteine 912, cysteine 828/cysteine 844, cysteine 926/cysteine 991, cysteine 955/cysteine 970, and cysteine 981/cysteine 1010. One can recognise a Peptidase S1 domain in the interval 802 to 1035 (ILGGRTSRPG…FVEWIKRQIY (234 aa)). Catalysis depends on charge relay system residues histidine 843 and aspartate 892. The active-site Charge relay system is serine 985. Asparagine 1022 carries N-linked (GlcNAc...) asparagine glycosylation.

It belongs to the peptidase S1 family. In terms of processing, N-glycosylated; required for processing and activation. Post-translationally, activated through proteolytic processing by a trypsin-like protease; cleaved into a N-terminal propeptide and an activated corin protease fragment. Different soluble forms are produced by cleavage and autocatalytic cleavage: Atrial natriuretic peptide-converting enzyme, 180 kDa soluble fragment is produced by cleavage by ADAM10, while 160 kDa and 100 kDa soluble fragments are produced by autocatalytic cleavage. Cleavage by ADAM10 to produce soluble 180 kDa soluble fragment takes place after the transmembrane region and before FZ 1. A disulfide bond links the activated corin protease fragment and the N-terminal propeptide. The disulfide bond also links the activated corin protease fragment with soluble fragments (100 kDa, 160 kDa and 180 kDa fragments). Highly expressed in heart. Expressed in heart myocytes. Also expressed in pregnant uterus. Detected in blood, in plasma as well as in serum (at protein level).

It is found in the cell membrane. The protein localises to the secreted. With respect to regulation, inhibited in a dose-dependent manner by non-specific trypsin-like serine protease inhibitors including benzamidine. Functionally, serine-type endopeptidase involved in atrial natriuretic peptide (NPPA) and brain natriuretic peptide (NPPB) processing. Converts through proteolytic cleavage the non-functional propeptides NPPA and NPPB into their active hormones, ANP and BNP(1-32) respectively, thereby regulating blood pressure in the heart and promoting natriuresis, diuresis and vasodilation. Proteolytic cleavage of pro-NPPA also plays a role in female pregnancy by promoting trophoblast invasion and spiral artery remodeling in uterus. Also acts as a regulator of sodium reabsorption in kidney. Its function is as follows. Has weaker endopeptidase activity compared to isoform 1. The protein is Atrial natriuretic peptide-converting enzyme (CORIN) of Homo sapiens (Human).